The following is a 93-amino-acid chain: Small integral membrane protein 41 (93 aa).

The helical transmembrane segment at 38–58 threads the bilayer; sequence VVLGVLSLLVLCGVLFLGGGL. A compositionally biased stretch (basic and acidic residues) spans 71 to 80; it reads REQRASREPE. Residues 71-93 are disordered; it reads REQRASREPEPGSASGEDGDDDS.

Its subcellular location is the membrane. This Homo sapiens (Human) protein is Small integral membrane protein 41.